We begin with the raw amino-acid sequence, 150 residues long: D-aminoacyl-tRNA deacylase (150 aa).

The Gly-cisPro motif, important for rejection of L-amino acids motif lies at 138 to 139 (GP).

The protein belongs to the DTD family. Homodimer.

The protein localises to the cytoplasm. It catalyses the reaction glycyl-tRNA(Ala) + H2O = tRNA(Ala) + glycine + H(+). It carries out the reaction a D-aminoacyl-tRNA + H2O = a tRNA + a D-alpha-amino acid + H(+). Its function is as follows. An aminoacyl-tRNA editing enzyme that deacylates mischarged D-aminoacyl-tRNAs. Also deacylates mischarged glycyl-tRNA(Ala), protecting cells against glycine mischarging by AlaRS. Acts via tRNA-based rather than protein-based catalysis; rejects L-amino acids rather than detecting D-amino acids in the active site. By recycling D-aminoacyl-tRNA to D-amino acids and free tRNA molecules, this enzyme counteracts the toxicity associated with the formation of D-aminoacyl-tRNA entities in vivo and helps enforce protein L-homochirality. The protein is D-aminoacyl-tRNA deacylase of Flavobacterium psychrophilum (strain ATCC 49511 / DSM 21280 / CIP 103535 / JIP02/86).